The sequence spans 150 residues: MPIWVDADACPIPVKEILYRAAHRAQVVTTLVANQGLRVPPSPFIKTQQVEKGFDVADHVIAQQVKPGDLVITGDIPLASWVIDAGGEALNPRGEIYTRETIKARLGMRNFMEELRSAGVQTGGPAPLNAADKQRFANALDKWLIRGKLS.

This sequence belongs to the UPF0178 family.

This chain is UPF0178 protein AHA_0543, found in Aeromonas hydrophila subsp. hydrophila (strain ATCC 7966 / DSM 30187 / BCRC 13018 / CCUG 14551 / JCM 1027 / KCTC 2358 / NCIMB 9240 / NCTC 8049).